Here is a 47-residue protein sequence, read N- to C-terminus: Large ribosomal subunit protein bL34 (47 aa).

The protein belongs to the bacterial ribosomal protein bL34 family.

This Mycobacterium leprae (strain TN) protein is Large ribosomal subunit protein bL34 (rpmH).